The sequence spans 336 residues: MGKGPGLDPSWSLAGTPCFKSTRLGKTHLESTAGGAQTGARLDPVQIARHSMCSSSVRLDHGPLPVGVAAMQGETFGPGADSQRSASGAEYQQLTCARLSVRDICYKLHAAARISMESGAWDSEYFDKRATPGVGAVGGSKMPPPHAHGAVAPPPAMYNNPAMESNKDDNFFGAIVLSLRAAQIVFTVVGLGVMGSLKHTSHGDYYYYYYDFSFTQVDSYIGVLSLDVIVCLYAIVQLVLCFIQRSNQGKYLSSPTTVAAKLTFVFDQVLAYALVATAGAAAGSALEIRKGTSCSGTWTVICSKGEASVAMSFFAFAFLAATAAVYSVRLLRITGR.

Over 1-170 (MGKGPGLDPS…PAMESNKDDN (170 aa)) the chain is Cytoplasmic. The helical transmembrane segment at 171–191 (FFGAIVLSLRAAQIVFTVVGL) threads the bilayer. Residues 192 to 222 (GVMGSLKHTSHGDYYYYYYDFSFTQVDSYIG) are Extracellular-facing. The chain crosses the membrane as a helical span at residues 223 to 243 (VLSLDVIVCLYAIVQLVLCFI). Over 244–261 (QRSNQGKYLSSPTTVAAK) the chain is Cytoplasmic. The helical transmembrane segment at 262–282 (LTFVFDQVLAYALVATAGAAA) threads the bilayer. The Extracellular portion of the chain corresponds to 283–307 (GSALEIRKGTSCSGTWTVICSKGEA). The helical transmembrane segment at 308-328 (SVAMSFFAFAFLAATAAVYSV) threads the bilayer. At 329-336 (RLLRITGR) the chain is on the cytoplasmic side.

The protein belongs to the Casparian strip membrane proteins (CASP) family. In terms of assembly, homodimer and heterodimers.

It localises to the cell membrane. In Physcomitrium patens (Spreading-leaved earth moss), this protein is CASP-like protein UU1.